The chain runs to 66 residues: Moricin-1 (66 aa).

Positions 1–24 (MNILKFFFVFIVAMSLVSCSTAAP) are cleaved as a signal peptide.

Expressed in fat body and to a lesser extent in hemocyte and Malpighian tubules.

The protein resides in the secreted. Functionally, has antibacterial activity against Gram-positive and Gram-negative bacteria. Probably acts by disturbing membrane functions with its amphipathic structure. The polypeptide is Moricin-1 (MOR1) (Bombyx mori (Silk moth)).